We begin with the raw amino-acid sequence, 202 residues long: Outer-membrane lipoprotein carrier protein (202 aa).

The N-terminal stretch at 1-21 (MKRLLVACCFLSGLISASALA) is a signal peptide.

This sequence belongs to the LolA family. In terms of assembly, monomer.

The protein localises to the periplasm. In terms of biological role, participates in the translocation of lipoproteins from the inner membrane to the outer membrane. Only forms a complex with a lipoprotein if the residue after the N-terminal Cys is not an aspartate (The Asp acts as a targeting signal to indicate that the lipoprotein should stay in the inner membrane). The sequence is that of Outer-membrane lipoprotein carrier protein from Yersinia pestis bv. Antiqua (strain Antiqua).